The sequence spans 363 residues: Probable iron/ascorbate oxidoreductase DDB_G0283291 (363 aa).

A Fe2OG dioxygenase domain is found at 197–306 (IFNYPSIISS…RISFPLFFDP (110 aa)). Fe cation-binding residues include His-230, Asp-232, and His-286. A 2-oxoglutarate-binding site is contributed by Arg-297.

This sequence belongs to the iron/ascorbate-dependent oxidoreductase family. Fe(2+) is required as a cofactor.

In Dictyostelium discoideum (Social amoeba), this protein is Probable iron/ascorbate oxidoreductase DDB_G0283291.